A 189-amino-acid polypeptide reads, in one-letter code: Shikimate kinase (189 aa).

22-27 (ASGKST) is a binding site for ATP. Residue Ser26 participates in Mg(2+) binding. Residues Asp44, Arg68, and Gly90 each coordinate substrate. An ATP-binding site is contributed by Arg128. A substrate-binding site is contributed by Arg147.

The protein belongs to the shikimate kinase family. As to quaternary structure, monomer. The cofactor is Mg(2+).

The protein localises to the cytoplasm. The enzyme catalyses shikimate + ATP = 3-phosphoshikimate + ADP + H(+). It functions in the pathway metabolic intermediate biosynthesis; chorismate biosynthesis; chorismate from D-erythrose 4-phosphate and phosphoenolpyruvate: step 5/7. In terms of biological role, catalyzes the specific phosphorylation of the 3-hydroxyl group of shikimic acid using ATP as a cosubstrate. In Synechococcus sp. (strain JA-3-3Ab) (Cyanobacteria bacterium Yellowstone A-Prime), this protein is Shikimate kinase.